A 254-amino-acid chain; its full sequence is 5'-methylthioadenosine/S-adenosylhomocysteine nucleosidase (254 aa).

Residue Met-1 is modified to N-acetylmethionine. The active-site Proton acceptor is Glu-25. Residues Thr-103 and 186 to 189 (KDME) contribute to the S-methyl-5'-thioadenosine site. Lys-186 and Asp-212 together coordinate adenine. Asp-212 serves as the catalytic Proton donor.

This sequence belongs to the PNP/UDP phosphorylase family. MtnN subfamily. Homodimer.

The catalysed reaction is S-methyl-5'-thioadenosine + H2O = 5-(methylsulfanyl)-D-ribose + adenine. It catalyses the reaction S-adenosyl-L-homocysteine + H2O = S-(5-deoxy-D-ribos-5-yl)-L-homocysteine + adenine. The enzyme catalyses 5'-deoxyadenosine + H2O = 5-deoxy-D-ribose + adenine. It participates in amino-acid biosynthesis; L-methionine biosynthesis via salvage pathway; S-methyl-5-thio-alpha-D-ribose 1-phosphate from S-methyl-5'-thioadenosine (hydrolase route): step 1/2. In terms of biological role, enzyme of the methionine cycle that catalyzes the irreversible cleavage of the glycosidic bond in 5'-methylthioadenosine (MTA) and S-adenosylhomocysteine (SAH/AdoHcy) to a lesser extent, to adenine and the corresponding thioribose, 5'-methylthioribose and S-ribosylhomocysteine, respectively. Contributes to the maintenance of AdoMet homeostasis and is required to sustain high rates of ethylene synthesis. This is 5'-methylthioadenosine/S-adenosylhomocysteine nucleosidase (MTN2) from Arabidopsis thaliana (Mouse-ear cress).